Here is a 238-residue protein sequence, read N- to C-terminus: tRNA1(Val) (adenine(37)-N6)-methyltransferase (238 aa).

Belongs to the methyltransferase superfamily. tRNA (adenine-N(6)-)-methyltransferase family.

It localises to the cytoplasm. The enzyme catalyses adenosine(37) in tRNA1(Val) + S-adenosyl-L-methionine = N(6)-methyladenosine(37) in tRNA1(Val) + S-adenosyl-L-homocysteine + H(+). In terms of biological role, specifically methylates the adenine in position 37 of tRNA(1)(Val) (anticodon cmo5UAC). The sequence is that of tRNA1(Val) (adenine(37)-N6)-methyltransferase from Shewanella baltica (strain OS185).